The chain runs to 382 residues: Sphingosine 1-phosphate receptor 1 (382 aa).

At 1-46 the chain is on the extracellular side; sequence MGSTRIPLVKALHSPVSDYVNYDIIVRHYNYTGKLKISADKDNGIK. Lys10 carries the post-translational modification N6-acetyllysine. Residue Asn30 is glycosylated (N-linked (GlcNAc...) asparagine). The chain crosses the membrane as a helical span at residues 47–68; that stretch reads LISVVFILICCFIILENIFVLL. The Cytoplasmic segment spans residues 69-82; that stretch reads TIWKTKKFHRPMYY. Residues 83–104 form a helical membrane-spanning segment; the sequence is FIGNLALSDLLAGVAYTANLLL. The Extracellular portion of the chain corresponds to 105–116; it reads SGATTYKLTPAQ. The helical transmembrane segment at 117–138 threads the bilayer; that stretch reads WFLREGSMFVALSASVFSLLAI. 120–121 lines the sphing-4-enine 1-phosphate pocket; the sequence is RE. The Cytoplasmic portion of the chain corresponds to 139 to 160; it reads AIERYITMLKMKLHNGSNRFRS. The helical transmembrane segment at 161–182 threads the bilayer; it reads FLLISACWVISLILGGLPIMGW. Topologically, residues 183–196 are extracellular; that stretch reads NCISTLPSCSTVLP. Cys184 and Cys191 are joined by a disulfide. Residues 197–224 traverse the membrane as a helical segment; that stretch reads LYHKHYILFCTTVFTLLLLSIVILYCRI. Topologically, residues 225-257 are cytoplasmic; that stretch reads YSLVRTRSRRLTFRKNISKASRSSEKSLALLKT. Thr236 carries the post-translational modification Phosphothreonine; by PKB/AKT1. A helical transmembrane segment spans residues 258–278; sequence VIIVLGVFIACWAPLFILLLL. Position 265–269 (265–269) interacts with sphing-4-enine 1-phosphate; it reads FIACW. Residues 279–289 lie on the Extracellular side of the membrane; the sequence is DVGCKVKTCDI. Cys282 and Cys287 are joined by a disulfide. Residues 290–310 traverse the membrane as a helical segment; it reads LFRTEYFLVLAVLNSGTNPII. At 311–382 the chain is on the cytoplasmic side; it reads YTLSNKEMRR…MSSGNVNSSS (72 aa). Residue Cys328 is the site of S-palmitoyl cysteine attachment. The interval 349–382 is disordered; sequence EFSRSKSDNSSHPQKDDGDNPETIMSSGNVNSSS. 2 positions are modified to phosphoserine: Ser351 and Ser353. The span at 351 to 366 shows a compositional bias: basic and acidic residues; sequence SRSKSDNSSHPQKDDG. Residues 371-382 show a composition bias toward polar residues; that stretch reads TIMSSGNVNSSS.

This sequence belongs to the G-protein coupled receptor 1 family. In terms of assembly, interacts with GNAI1 and GNAI3. Interacts with CD69; this interaction promotes S1PR1 degradation. Post-translationally, S1P-induced endothelial cell migration requires the PKB/AKT1-mediated phosphorylation of the third intracellular loop at the Thr-236 residue. In terms of processing, palmitoylated by ZDHHC5. Palmitoylation is required for targeting to plasma membrane, enabling G(i) coupling.

It localises to the cell membrane. The protein resides in the endosome. It is found in the membrane raft. Its function is as follows. G-protein coupled receptor for the bioactive lysosphingolipid sphingosine 1-phosphate (S1P) that seems to be coupled to the G(i) subclass of heteromeric G proteins. Signaling leads to the activation of RAC1, SRC, PTK2/FAK1 and MAP kinases. Plays an important role in cell migration, probably via its role in the reorganization of the actin cytoskeleton and the formation of lamellipodia in response to stimuli that increase the activity of the sphingosine kinase SPHK1. Required for normal chemotaxis toward sphingosine 1-phosphate. Required for normal embryonic heart development and normal cardiac morphogenesis. Plays an important role in the regulation of sprouting angiogenesis and vascular maturation. Inhibits sprouting angiogenesis to prevent excessive sprouting during blood vessel development. Required for normal egress of mature T-cells from the thymus into the blood stream and into peripheral lymphoid organs. Plays a role in the migration of osteoclast precursor cells, the regulation of bone mineralization and bone homeostasis. Plays a role in responses to oxidized 1-palmitoyl-2-arachidonoyl-sn-glycero-3-phosphocholine by pulmonary endothelial cells and in the protection against ventilator-induced lung injury. The chain is Sphingosine 1-phosphate receptor 1 (S1PR1) from Bos taurus (Bovine).